We begin with the raw amino-acid sequence, 426 residues long: Cdc25-like protein phosphatase twine (426 aa).

Positions 1 to 27 are disordered; sequence MASKRLMLDVEEEDDESGACGQENFDP. A Rhodanese domain is found at 265–371; the sequence is SQGGYEIIDC…FFGLYSQLCQ (107 aa). Residue cysteine 318 is part of the active site.

This sequence belongs to the MPI phosphatase family. As to expression, expressed in developing male and female germ cells.

It catalyses the reaction O-phospho-L-tyrosyl-[protein] + H2O = L-tyrosyl-[protein] + phosphate. Required during meiosis. Regulates the transition from the extended G2 phase to the onset of the first meiotic division. The sequence is that of Cdc25-like protein phosphatase twine (twe) from Drosophila melanogaster (Fruit fly).